Consider the following 256-residue polypeptide: Protein TV0584 (256 aa).

This sequence belongs to the CinA family.

The protein is Protein TV0584 of Thermoplasma volcanium (strain ATCC 51530 / DSM 4299 / JCM 9571 / NBRC 15438 / GSS1).